We begin with the raw amino-acid sequence, 621 residues long: Phytoene desaturase (621 aa).

Positions 1 to 23 (MPSTSKRPTAIVIGSGVGGVSTA) are cleaved as a signal peptide. Residues 394–425 (HASQAHQLSASRNGHISSASPPDQPGLTPTEK) are disordered. Positions 397–414 (QAHQLSASRNGHISSASP) are enriched in polar residues. A helical transmembrane segment spans residues 598–618 (WEQWVSVLIYLLVGIFAWLWM).

Belongs to the carotenoid/retinoid oxidoreductase family. NAD(+) is required as a cofactor.

It is found in the membrane. It carries out the reaction 15-cis-phytoene + 5 A = all-trans-3,4-didehydrolycopene + 5 AH2. It functions in the pathway carotenoid biosynthesis; lycopene biosynthesis. Functionally, phytoene desaturase involved in the carotenoid biosynthesis pathway. Converts phytoene into 3,4-didehydrolycopene via the intermediary of phytofluene, zeta-carotene, neurosporene and lycopene, by introducing up to five double bonds into phytoene. In Cercospora nicotianae (Barn spot disease fungus), this protein is Phytoene desaturase (PDH1).